The primary structure comprises 55 residues: Large ribosomal subunit protein bL33 (55 aa).

The protein belongs to the bacterial ribosomal protein bL33 family.

The polypeptide is Large ribosomal subunit protein bL33 (rpmG) (Nitrobacter hamburgensis (strain DSM 10229 / NCIMB 13809 / X14)).